The sequence spans 171 residues: Protein hunchback (171 aa).

Disordered stretches follow at residues 14–93 (PMSH…PMQI) and 124–171 (SNDK…KYMA). The segment covering 17–31 (HHHHHSHHSHGHHHS) has biased composition (basic residues). Low complexity-rich tracts occupy residues 32–42 (NSNSNASSPRQ) and 52–80 (SSSNLHLEQYLKQQQQHQQQQQQPMDTPL). The segment covering 152 to 171 (EPEKDHDLMSNSSEDMKYMA) has biased composition (basic and acidic residues).

The protein belongs to the hunchback C2H2-type zinc-finger protein family.

The protein resides in the nucleus. Functionally, gap class segmentation protein that controls development of head structures. This is Protein hunchback (hb) from Scaptomyza albovittata (Fruit fly).